A 309-amino-acid polypeptide reads, in one-letter code: Mycothiol acetyltransferase (309 aa).

N-acetyltransferase domains lie at 16–158 and 166–309; these read ETLA…LDLP and VSVR…RTET. Glutamate 47 serves as a coordination point for 1D-myo-inositol 2-(L-cysteinylamino)-2-deoxy-alpha-D-glucopyranoside. 92-94 lines the acetyl-CoA pocket; that stretch reads LVV. 1D-myo-inositol 2-(L-cysteinylamino)-2-deoxy-alpha-D-glucopyranoside is bound by residues glutamate 193, lysine 232, and glutamate 241. Residues 245–247 and 252–258 contribute to the acetyl-CoA site; these read LGI and QGGGLGK. Position 279 (tyrosine 279) interacts with 1D-myo-inositol 2-(L-cysteinylamino)-2-deoxy-alpha-D-glucopyranoside.

Belongs to the acetyltransferase family. MshD subfamily. As to quaternary structure, monomer.

The catalysed reaction is 1D-myo-inositol 2-(L-cysteinylamino)-2-deoxy-alpha-D-glucopyranoside + acetyl-CoA = mycothiol + CoA + H(+). Its function is as follows. Catalyzes the transfer of acetyl from acetyl-CoA to desacetylmycothiol (Cys-GlcN-Ins) to form mycothiol. The chain is Mycothiol acetyltransferase from Streptomyces coelicolor (strain ATCC BAA-471 / A3(2) / M145).